Here is a 234-residue protein sequence, read N- to C-terminus: Zein-alpha 19B1 (234 aa).

Residues 1 to 21 (MAAKIFCLLMLLGLSASAATA) form the signal peptide.

The protein belongs to the zein family.

Zeins are major seed storage proteins. This is Zein-alpha 19B1 from Zea mays (Maize).